Here is a 172-residue protein sequence, read N- to C-terminus: Large ribosomal subunit protein uL10 (172 aa).

It belongs to the universal ribosomal protein uL10 family. Part of the ribosomal stalk of the 50S ribosomal subunit. The N-terminus interacts with L11 and the large rRNA to form the base of the stalk. The C-terminus forms an elongated spine to which L12 dimers bind in a sequential fashion forming a multimeric L10(L12)X complex.

Its function is as follows. Forms part of the ribosomal stalk, playing a central role in the interaction of the ribosome with GTP-bound translation factors. The protein is Large ribosomal subunit protein uL10 of Rhizobium etli (strain ATCC 51251 / DSM 11541 / JCM 21823 / NBRC 15573 / CFN 42).